Consider the following 89-residue polypeptide: MALTKERTASVVQQYGSGEKDTGSSSVQIALLTERIRQLTDHCKVHPKDKSSNRGLLVLVGRRRRLLRYSRRVSMGAYRSLVKSLGLRK.

A disordered region spans residues 1–23 (MALTKERTASVVQQYGSGEKDTG).

This sequence belongs to the universal ribosomal protein uS15 family. Part of the 30S ribosomal subunit. Forms a bridge to the 50S subunit in the 70S ribosome, contacting the 23S rRNA.

Its function is as follows. One of the primary rRNA binding proteins, it binds directly to 16S rRNA where it helps nucleate assembly of the platform of the 30S subunit by binding and bridging several RNA helices of the 16S rRNA. In terms of biological role, forms an intersubunit bridge (bridge B4) with the 23S rRNA of the 50S subunit in the ribosome. The polypeptide is Small ribosomal subunit protein uS15 (Treponema pallidum (strain Nichols)).